A 409-amino-acid polypeptide reads, in one-letter code: Argininosuccinate synthase (409 aa).

ATP-binding positions include 16–24 (AYSGGLDTS) and A44. Residues Y96 and S101 each coordinate L-citrulline. Residue G126 coordinates ATP. Residues T128, N132, and D133 each contribute to the L-aspartate site. L-citrulline is bound at residue N132. The L-citrulline site is built by R136, S185, S194, E270, and Y282.

This sequence belongs to the argininosuccinate synthase family. Type 1 subfamily. Homotetramer.

Its subcellular location is the cytoplasm. It catalyses the reaction L-citrulline + L-aspartate + ATP = 2-(N(omega)-L-arginino)succinate + AMP + diphosphate + H(+). It participates in amino-acid biosynthesis; L-arginine biosynthesis; L-arginine from L-ornithine and carbamoyl phosphate: step 2/3. In Shewanella piezotolerans (strain WP3 / JCM 13877), this protein is Argininosuccinate synthase.